A 363-amino-acid chain; its full sequence is NAD(P)H-quinone oxidoreductase subunit 1, chloroplastic (363 aa).

Helical transmembrane passes span 30 to 50, 104 to 124, 129 to 149, 248 to 268, 300 to 320, and 343 to 363; these read FLPILTLVLGITIGVLVIVWL, IAVISILLSYSVIPFSYHLVL, IGVFLWIAISSIAPIGLLMSG, YSGIKFGLFYVASYLNLLVSS, VFGTTIGIFITLAKTYFFLFI, and FLLPISLGNLLLTTSFQLLSL.

The protein belongs to the complex I subunit 1 family. In terms of assembly, NDH is composed of at least 16 different subunits, 5 of which are encoded in the nucleus.

Its subcellular location is the plastid. It is found in the chloroplast thylakoid membrane. It carries out the reaction a plastoquinone + NADH + (n+1) H(+)(in) = a plastoquinol + NAD(+) + n H(+)(out). The catalysed reaction is a plastoquinone + NADPH + (n+1) H(+)(in) = a plastoquinol + NADP(+) + n H(+)(out). In terms of biological role, NDH shuttles electrons from NAD(P)H:plastoquinone, via FMN and iron-sulfur (Fe-S) centers, to quinones in the photosynthetic chain and possibly in a chloroplast respiratory chain. The immediate electron acceptor for the enzyme in this species is believed to be plastoquinone. Couples the redox reaction to proton translocation, and thus conserves the redox energy in a proton gradient. The protein is NAD(P)H-quinone oxidoreductase subunit 1, chloroplastic of Eucalyptus globulus subsp. globulus (Tasmanian blue gum).